The primary structure comprises 341 residues: Small ribosomal subunit biogenesis GTPase RsgA (341 aa).

In terms of domain architecture, CP-type G spans 112–268; the sequence is RQQLIAANLD…LIDTPGMREL (157 aa). GTP is bound by residues 157-160 and 210-218; these read TKVD and GSSGAGKST. Cysteine 290, cysteine 295, histidine 297, and cysteine 303 together coordinate Zn(2+).

The protein belongs to the TRAFAC class YlqF/YawG GTPase family. RsgA subfamily. In terms of assembly, monomer. Associates with 30S ribosomal subunit, binds 16S rRNA. It depends on Zn(2+) as a cofactor.

The protein resides in the cytoplasm. One of several proteins that assist in the late maturation steps of the functional core of the 30S ribosomal subunit. Helps release RbfA from mature subunits. May play a role in the assembly of ribosomal proteins into the subunit. Circularly permuted GTPase that catalyzes slow GTP hydrolysis, GTPase activity is stimulated by the 30S ribosomal subunit. The sequence is that of Small ribosomal subunit biogenesis GTPase RsgA from Xylella fastidiosa (strain Temecula1 / ATCC 700964).